Consider the following 310-residue polypeptide: tRNA dimethylallyltransferase (310 aa).

13-20 (GPTASGKT) lines the ATP pocket. A substrate-binding site is contributed by 15–20 (TASGKT). 4 interaction with substrate tRNA regions span residues 38–41 (DSAL), 162–166 (QRLSR), 243–248 (RCVGYR), and 276–283 (KRQITWLR).

This sequence belongs to the IPP transferase family. In terms of assembly, monomer. Mg(2+) is required as a cofactor.

It catalyses the reaction adenosine(37) in tRNA + dimethylallyl diphosphate = N(6)-dimethylallyladenosine(37) in tRNA + diphosphate. Catalyzes the transfer of a dimethylallyl group onto the adenine at position 37 in tRNAs that read codons beginning with uridine, leading to the formation of N6-(dimethylallyl)adenosine (i(6)A). This chain is tRNA dimethylallyltransferase, found in Vibrio campbellii (strain ATCC BAA-1116).